A 94-amino-acid polypeptide reads, in one-letter code: Large ribosomal subunit protein uL23 (94 aa).

It belongs to the universal ribosomal protein uL23 family. As to quaternary structure, part of the 50S ribosomal subunit. Contacts protein L29, and trigger factor when it is bound to the ribosome.

One of the early assembly proteins it binds 23S rRNA. One of the proteins that surrounds the polypeptide exit tunnel on the outside of the ribosome. Forms the main docking site for trigger factor binding to the ribosome. The chain is Large ribosomal subunit protein uL23 from Treponema pallidum (strain Nichols).